The following is a 320-amino-acid chain: Prophage side tail fiber protein homolog StfQ (320 aa).

2 disordered regions span residues 147 to 213 (SGRA…HKSS) and 241 to 270 (TTSG…TAAS). 2 stretches are compositionally biased toward polar residues: residues 172–206 (DLGT…NSAG) and 241–258 (TTSG…SSDG). The segment covering 261-270 (THSLSGTAAS) has biased composition (low complexity).

Belongs to the tail fiber family.

The protein is Prophage side tail fiber protein homolog StfQ (stfQ) of Escherichia coli (strain K12).